Reading from the N-terminus, the 248-residue chain is UDP-2,3-diacylglucosamine hydrolase (248 aa).

Mn(2+)-binding residues include Asp8, His10, Asp41, Asn79, and His114. 79-80 serves as a coordination point for substrate; it reads NR. Residues Asp122, Asn164, Arg167, and His195 each coordinate substrate. His195 and His197 together coordinate Mn(2+).

It belongs to the LpxH family. Mn(2+) is required as a cofactor.

Its subcellular location is the cell inner membrane. It carries out the reaction UDP-2-N,3-O-bis[(3R)-3-hydroxytetradecanoyl]-alpha-D-glucosamine + H2O = 2-N,3-O-bis[(3R)-3-hydroxytetradecanoyl]-alpha-D-glucosaminyl 1-phosphate + UMP + 2 H(+). It participates in glycolipid biosynthesis; lipid IV(A) biosynthesis; lipid IV(A) from (3R)-3-hydroxytetradecanoyl-[acyl-carrier-protein] and UDP-N-acetyl-alpha-D-glucosamine: step 4/6. Functionally, hydrolyzes the pyrophosphate bond of UDP-2,3-diacylglucosamine to yield 2,3-diacylglucosamine 1-phosphate (lipid X) and UMP by catalyzing the attack of water at the alpha-P atom. Involved in the biosynthesis of lipid A, a phosphorylated glycolipid that anchors the lipopolysaccharide to the outer membrane of the cell. The polypeptide is UDP-2,3-diacylglucosamine hydrolase (Wigglesworthia glossinidia brevipalpis).